We begin with the raw amino-acid sequence, 537 residues long: Membrane protein insertase YidC (537 aa).

The next 5 membrane-spanning stretches (helical) occupy residues 6–26 (SLLA…WEID), 341–363 (LVSN…LYPL), 411–431 (LGGC…YWTF), 449–469 (LSAQ…MFLL), and 490–510 (PVIF…YWLV).

Belongs to the OXA1/ALB3/YidC family. Type 1 subfamily. In terms of assembly, interacts with the Sec translocase complex via SecD. Specifically interacts with transmembrane segments of nascent integral membrane proteins during membrane integration.

Its subcellular location is the cell inner membrane. In terms of biological role, required for the insertion and/or proper folding and/or complex formation of integral membrane proteins into the membrane. Involved in integration of membrane proteins that insert both dependently and independently of the Sec translocase complex, as well as at least some lipoproteins. Aids folding of multispanning membrane proteins. The protein is Membrane protein insertase YidC of Actinobacillus succinogenes (strain ATCC 55618 / DSM 22257 / CCUG 43843 / 130Z).